Reading from the N-terminus, the 64-residue chain is Large ribosomal subunit protein bL35 (64 aa).

It belongs to the bacterial ribosomal protein bL35 family.

This chain is Large ribosomal subunit protein bL35, found in Streptomyces coelicolor (strain ATCC BAA-471 / A3(2) / M145).